The following is a 239-amino-acid chain: MEEKKLLFNIGPIWFDGTIVLMVLLTCIIVFAFVYACTRNMKLRPKGKQTVIEWLVDFIRGIITDNLPRKEVSNFHLMAFTLFMFVLVSNILGLVTKIVVGDDLSVWKSPTADPIVTLTLAMMMIVLTHFFGMKRFGFKGYLVNSYLRPVGFLLPVKLMEEFTNLLTLGLRLYGNIFAGEVLLGLIAGTVASVGLWVIPLAIPLEMIWVAFSIFIGCIQAFIFVTLSMVYMSHKIETEE.

A run of 5 helical transmembrane segments spans residues 13–33 (IWFDGTIVLMVLLTCIIVFAF), 75–95 (FHLMAFTLFMFVLVSNILGLV), 113–133 (DPIVTLTLAMMMIVLTHFFGM), 174–194 (GNIFAGEVLLGLIAGTVASVG), and 208–230 (WVAFSIFIGCIQAFIFVTLSMVY).

It belongs to the ATPase A chain family. As to quaternary structure, F-type ATPases have 2 components, CF(1) - the catalytic core - and CF(0) - the membrane proton channel. CF(1) has five subunits: alpha(3), beta(3), gamma(1), delta(1), epsilon(1). CF(0) has three main subunits: a(1), b(2) and c(9-12). The alpha and beta chains form an alternating ring which encloses part of the gamma chain. CF(1) is attached to CF(0) by a central stalk formed by the gamma and epsilon chains, while a peripheral stalk is formed by the delta and b chains.

It is found in the cell membrane. Its function is as follows. Key component of the proton channel; it plays a direct role in the translocation of protons across the membrane. This Enterococcus faecalis (strain ATCC 700802 / V583) protein is ATP synthase subunit a.